A 428-amino-acid polypeptide reads, in one-letter code: C4-dicarboxylate transport protein 1 (428 aa).

Transmembrane regions (helical) follow at residues 5–27, 42–64, 77–99, 150–167, 188–210, 225–247, 314–336, and 351–373; these read FYKILYVQVLAAIVIGVLLGHFE, IQLIKMVIGPIIFCTVVSGIAGM, ALLYFEVVSTFALVIGLVAGHIF, ILQILLIALLFGGALSAM, IVHVITRVAPIGAFGAMAFTIGK, TFYLTAIIFVVVVLGIIARLTGF, IFISQALNIELTLTQQLTILAVA, and FITLAATLAVVPTIPVAGMVLIL.

It belongs to the dicarboxylate/amino acid:cation symporter (DAACS) (TC 2.A.23) family.

The protein resides in the cell inner membrane. Responsible for the transport of dicarboxylates such as succinate, fumarate, and malate from the periplasm across the membrane. The chain is C4-dicarboxylate transport protein 1 (dctA1) from Ralstonia nicotianae (strain ATCC BAA-1114 / GMI1000) (Ralstonia solanacearum).